A 249-amino-acid chain; its full sequence is Molybdate/tungstate transport system permease protein WtpB (249 aa).

The Cytoplasmic portion of the chain corresponds to 1–10 (MDRRDYLAYA). A helical transmembrane segment spans residues 11–31 (FAGLGAFLVAFIGLPLFMIFI). The Extracellular segment spans residues 32-56 (KQAYDLEALQRTLVDPLVIESIRNS). The 187-residue stretch at 53 to 239 (IRNSLFTATV…TISLAVFIFL (187 aa)) folds into the ABC transmembrane type-1 domain. A helical transmembrane segment spans residues 57-77 (LFTATVSTLLGILFGVPLGYV). The Cytoplasmic segment spans residues 78–96 (LARKEFKGKNFVQALIDTP). Residues 97–117 (IVIPHSVVGIMLLVTFSDAIL) form a helical membrane-spanning segment. Asp-118 is a topological domain (extracellular). The chain crosses the membrane as a helical span at residues 119–139 (NYKGIVAVMLFVSSPFIVNSA). At 140-179 (RDGFLSVDEKLEYVARTLGASGLRTFFSVTLPNAIHSIAS) the chain is on the cytoplasmic side. Residues 180–200 (GAIMAWARAISEVGAILIVAY) traverse the membrane as a helical segment. The Extracellular segment spans residues 201–223 (YPKTAQVLIMEYFNNYGLRASRP). Residues 224–244 (IAVILVTISLAVFIFLRWLVG) traverse the membrane as a helical segment. Residues 245-249 (RGRNA) are Cytoplasmic-facing.

Belongs to the binding-protein-dependent transport system permease family. As to quaternary structure, the complex is composed of two ATP-binding proteins (WtpC), two transmembrane proteins (WtpB) and a solute-binding protein (WtpA).

The protein localises to the cell membrane. Part of the ABC transporter complex WtpABC involved in molybdate/tungstate import. Probably responsible for the translocation of the substrate across the membrane. This chain is Molybdate/tungstate transport system permease protein WtpB, found in Pyrococcus furiosus (strain ATCC 43587 / DSM 3638 / JCM 8422 / Vc1).